The chain runs to 292 residues: uncharacterized protein (292 aa).

Residues 13–35 form a helical membrane-spanning segment; it reads LFILFIIVVCIYLLPRVAINAFY.

It belongs to the serine esterase family.

It localises to the membrane. This is an uncharacterized protein from Salmonella typhimurium (strain LT2 / SGSC1412 / ATCC 700720).